The following is a 109-amino-acid chain: Iron-sulfur cluster assembly protein CyaY (109 aa).

The protein belongs to the frataxin family.

Its function is as follows. Involved in iron-sulfur (Fe-S) cluster assembly. May act as a regulator of Fe-S biogenesis. The polypeptide is Iron-sulfur cluster assembly protein CyaY (Albidiferax ferrireducens (strain ATCC BAA-621 / DSM 15236 / T118) (Rhodoferax ferrireducens)).